The chain runs to 243 residues: Probable transcriptional regulatory protein BAPKO_0024/BafPKo_0025 (243 aa).

The protein belongs to the TACO1 family.

The protein resides in the cytoplasm. The sequence is that of Probable transcriptional regulatory protein BAPKO_0024/BafPKo_0025 from Borreliella afzelii (strain PKo) (Borrelia afzelii).